The following is a 219-amino-acid chain: DnaJ homolog subfamily C member 30, mitochondrial (219 aa).

The N-terminal 38 residues, 1 to 38, are a transit peptide targeting the mitochondrion; sequence MAAARCLGWTLSPLWRWWQVRGLPPSSATGLCSRGRTY. One can recognise a J domain in the interval 42-107; sequence ALYELLGVPS…ILRRKYDRGL (66 aa). The segment at 109-148 is disordered; sequence SDQDLRGPGVKPSKTPVADPAPPRPPPYTPRAPGGSRASP. A compositionally biased stretch (pro residues) spans 127–138; that stretch reads DPAPPRPPPYTP. Residues 202 to 218 form a helical membrane-spanning segment; that stretch reads ATFFVVLFLIFVFVGFR.

In terms of assembly, associates with the ATP synthase complex. Interacts with MT-ATP6; interaction is direct. Interacts with ATP5MC2; interaction is direct. In terms of tissue distribution, in brain, expressed in gray matter structures.

It is found in the mitochondrion inner membrane. In terms of biological role, mitochondrial protein enriched in neurons that acts as a regulator of mitochondrial respiration. Associates with the ATP synthase complex and facilitates ATP synthesis. May be a chaperone protein involved in the turnover of the subunits of mitochondrial complex I N-module. It facilitates the degradation of N-module subunits damaged by oxidative stress, and contributes to complex I functional efficiency. This chain is DnaJ homolog subfamily C member 30, mitochondrial, found in Mus musculus (Mouse).